The sequence spans 128 residues: Probable 4-amino-4-deoxy-L-arabinose-phosphoundecaprenol flippase subunit ArnF (128 aa).

Residues 1–2 (MG) lie on the Cytoplasmic side of the membrane. The helical transmembrane segment at 3–23 (LMWGLFSVIIASAAQLSLGFA) threads the bilayer. The Periplasmic segment spans residues 24–35 (ASHLPPMTHLWD). A helical membrane pass occupies residues 36–56 (FIAALLAFGLDARILLLGLLG). At 57-76 (YLLSVFCWYKTLHKLALSKA) the chain is on the cytoplasmic side. A helical membrane pass occupies residues 77–97 (YALLSMSYVLVWIASMILPGW). Topologically, residues 98 to 100 (EGT) are periplasmic. The helical transmembrane segment at 101–121 (FSLKALLGVACIMSGLMLIFL) threads the bilayer. Residues 122 to 128 (PTTKQRY) are Cytoplasmic-facing.

Belongs to the ArnF family. In terms of assembly, heterodimer of ArnE and ArnF.

Its subcellular location is the cell inner membrane. It functions in the pathway bacterial outer membrane biogenesis; lipopolysaccharide biosynthesis. Functionally, translocates 4-amino-4-deoxy-L-arabinose-phosphoundecaprenol (alpha-L-Ara4N-phosphoundecaprenol) from the cytoplasmic to the periplasmic side of the inner membrane. This is Probable 4-amino-4-deoxy-L-arabinose-phosphoundecaprenol flippase subunit ArnF from Escherichia coli O17:K52:H18 (strain UMN026 / ExPEC).